Consider the following 132-residue polypeptide: RuBisCO chaperone RbcX (132 aa).

Positions 110–132 (HLSLSNPSPESEQQTISDTDWDH) are disordered. Residues 111 to 132 (LSLSNPSPESEQQTISDTDWDH) show a composition bias toward polar residues.

Belongs to the RbcX family. Homodimer. Interacts with the exposed C-terminal peptide of RbcL via its central cleft, contacts a second RbcL monomer via its peripheral polar surface. RbcX and Raf1 can bind simultaneously to RbcL.

It is found in the carboxysome. It localises to the cytoplasm. Its function is as follows. An RbcL-specific chaperone. The central cleft of the RbcX homodimer (RbcX2) binds the C-terminus of an RbcL monomer, stabilizing the C-terminus and probably preventing its reassociation with chaperonin GroEL-ES. At the same time the peripheral region of RbcX2 binds a second RbcL monomer, bridging the RbcL homodimers in the correct orientation. The RbcX2(2)-bound RbcL dimers then assemble into the RbcL8 core (RbcL8-(RbcX2)8). RbcS binding triggers the release of RbcX2. In terms of biological role, when rbcL-rbcX-rbcS or rbcL-rbcS were overexpressed in E.coli no change in reconstituted RuBisCO activity was observed, which suggests RbcX plays no role in RuBisCO assembly in this system. However in PubMed:8472962 E.coli chaperones groL and groS were also overexpressed, which may compensate for lack of rbcX. The sequence is that of RuBisCO chaperone RbcX from Nostoc sp. (strain PCC 7120 / SAG 25.82 / UTEX 2576).